A 536-amino-acid chain; its full sequence is Probable cytochrome P450 520A1 (536 aa).

A helical membrane pass occupies residues 1-21 (MEILTFIIYLITFFILFDFYK). Cys-479 lines the heme pocket.

Belongs to the cytochrome P450 family. The cofactor is heme.

It localises to the membrane. In Dictyostelium discoideum (Social amoeba), this protein is Probable cytochrome P450 520A1 (cyp520A1).